Consider the following 415-residue polypeptide: Isocitrate dehydrogenase [NADP] (415 aa).

NADP(+)-binding positions include 77–79 (TIT) and Arg-84. Position 79 (Thr-79) interacts with substrate. Residues 96–102 (SPNGTIR), Arg-111, and Arg-134 each bind substrate. Position 254 (Asp-254) interacts with Mn(2+). Position 262 (Lys-262) interacts with NADP(+). Asp-277 serves as a coordination point for Mn(2+). NADP(+)-binding positions include 312–317 (GTVTRH) and Asn-330.

Belongs to the isocitrate and isopropylmalate dehydrogenases family. Heterodimer. Mg(2+) serves as cofactor. Mn(2+) is required as a cofactor.

Its subcellular location is the cytoplasm. It carries out the reaction D-threo-isocitrate + NADP(+) = 2-oxoglutarate + CO2 + NADPH. Functionally, may supply 2-oxoglutarate for amino acid biosynthesis and ammonia assimilation via the glutamine synthetase/glutamate synthase (GS/GOGAT) pathway. This Nicotiana tabacum (Common tobacco) protein is Isocitrate dehydrogenase [NADP].